A 675-amino-acid chain; its full sequence is DNA ligase (675 aa).

Residues 32–36 (DAEYD), 81–82 (SL), and Glu113 each bind NAD(+). Catalysis depends on Lys115, which acts as the N6-AMP-lysine intermediate. NAD(+) is bound by residues Arg136, Glu173, Lys291, and Lys315. Zn(2+) contacts are provided by Cys409, Cys412, Cys427, and Cys433. One can recognise a BRCT domain in the interval 595 to 675 (SEKTYFFNKK…ELNSLIRIKE (81 aa)).

Belongs to the NAD-dependent DNA ligase family. LigA subfamily. It depends on Mg(2+) as a cofactor. Requires Mn(2+) as cofactor.

The catalysed reaction is NAD(+) + (deoxyribonucleotide)n-3'-hydroxyl + 5'-phospho-(deoxyribonucleotide)m = (deoxyribonucleotide)n+m + AMP + beta-nicotinamide D-nucleotide.. In terms of biological role, DNA ligase that catalyzes the formation of phosphodiester linkages between 5'-phosphoryl and 3'-hydroxyl groups in double-stranded DNA using NAD as a coenzyme and as the energy source for the reaction. It is essential for DNA replication and repair of damaged DNA. In Buchnera aphidicola subsp. Acyrthosiphon pisum (strain APS) (Acyrthosiphon pisum symbiotic bacterium), this protein is DNA ligase.